Reading from the N-terminus, the 176-residue chain is ATP-dependent protease subunit HslV (176 aa).

Thr-2 is a catalytic residue. Residues Gly-157, Cys-160, and Thr-163 each contribute to the Na(+) site.

This sequence belongs to the peptidase T1B family. HslV subfamily. In terms of assembly, a double ring-shaped homohexamer of HslV is capped on each side by a ring-shaped HslU homohexamer. The assembly of the HslU/HslV complex is dependent on binding of ATP.

The protein resides in the cytoplasm. The catalysed reaction is ATP-dependent cleavage of peptide bonds with broad specificity.. Allosterically activated by HslU binding. Functionally, protease subunit of a proteasome-like degradation complex believed to be a general protein degrading machinery. In Marinobacter nauticus (strain ATCC 700491 / DSM 11845 / VT8) (Marinobacter aquaeolei), this protein is ATP-dependent protease subunit HslV.